The primary structure comprises 633 residues: Phosphomethylpyrimidine synthase (633 aa).

Residues Asn-245, Met-274, Tyr-303, His-339, 359 to 361, 400 to 403, and Glu-439 each bind substrate; these read SRG and DGLR. His-443 contacts Zn(2+). Tyr-466 is a substrate binding site. His-507 contacts Zn(2+). [4Fe-4S] cluster contacts are provided by Cys-587, Cys-590, and Cys-595.

It belongs to the ThiC family. In terms of assembly, homodimer. Requires [4Fe-4S] cluster as cofactor.

The catalysed reaction is 5-amino-1-(5-phospho-beta-D-ribosyl)imidazole + S-adenosyl-L-methionine = 4-amino-2-methyl-5-(phosphooxymethyl)pyrimidine + CO + 5'-deoxyadenosine + formate + L-methionine + 3 H(+). It participates in cofactor biosynthesis; thiamine diphosphate biosynthesis. Catalyzes the synthesis of the hydroxymethylpyrimidine phosphate (HMP-P) moiety of thiamine from aminoimidazole ribotide (AIR) in a radical S-adenosyl-L-methionine (SAM)-dependent reaction. The protein is Phosphomethylpyrimidine synthase of Neisseria meningitidis serogroup C / serotype 2a (strain ATCC 700532 / DSM 15464 / FAM18).